The chain runs to 362 residues: 3-dehydroquinate synthase (362 aa).

NAD(+) is bound by residues 71–76 (DGEQYK), 105–109 (GVIGD), 129–130 (TT), Lys-142, Lys-151, and 169–172 (CLKT). The Zn(2+) site is built by Glu-184, His-247, and His-264.

The protein belongs to the sugar phosphate cyclases superfamily. Dehydroquinate synthase family. Co(2+) serves as cofactor. It depends on Zn(2+) as a cofactor. Requires NAD(+) as cofactor.

It is found in the cytoplasm. It carries out the reaction 7-phospho-2-dehydro-3-deoxy-D-arabino-heptonate = 3-dehydroquinate + phosphate. Its pathway is metabolic intermediate biosynthesis; chorismate biosynthesis; chorismate from D-erythrose 4-phosphate and phosphoenolpyruvate: step 2/7. In terms of biological role, catalyzes the conversion of 3-deoxy-D-arabino-heptulosonate 7-phosphate (DAHP) to dehydroquinate (DHQ). In Salmonella enteritidis PT4 (strain P125109), this protein is 3-dehydroquinate synthase.